Reading from the N-terminus, the 146-residue chain is Antirestriction protein KlcA (146 aa).

It belongs to the antirestriction protein family.

Functionally, could be involved in overcoming restriction barriers during establishment after conjugative transfer. The chain is Antirestriction protein KlcA (klcA) from Escherichia coli.